The sequence spans 149 residues: Putative pre-16S rRNA nuclease (149 aa).

It belongs to the YqgF nuclease family.

It localises to the cytoplasm. In terms of biological role, could be a nuclease involved in processing of the 5'-end of pre-16S rRNA. This Burkholderia lata (strain ATCC 17760 / DSM 23089 / LMG 22485 / NCIMB 9086 / R18194 / 383) protein is Putative pre-16S rRNA nuclease.